Reading from the N-terminus, the 598-residue chain is NADH-quinone oxidoreductase subunit C/D (598 aa).

The NADH dehydrogenase I subunit C stretch occupies residues 1–189 (MTDLTTSDSL…DPYVLTKQKE (189 aa)). The interval 213-598 (DFMFLNLGPN…IDFVMSDVDR (386 aa)) is NADH dehydrogenase I subunit D.

It in the N-terminal section; belongs to the complex I 30 kDa subunit family. In the C-terminal section; belongs to the complex I 49 kDa subunit family. NDH-1 is composed of 13 different subunits. Subunits NuoB, CD, E, F, and G constitute the peripheral sector of the complex.

The protein localises to the cell inner membrane. It catalyses the reaction a quinone + NADH + 5 H(+)(in) = a quinol + NAD(+) + 4 H(+)(out). Its function is as follows. NDH-1 shuttles electrons from NADH, via FMN and iron-sulfur (Fe-S) centers, to quinones in the respiratory chain. The immediate electron acceptor for the enzyme in this species is believed to be ubiquinone. Couples the redox reaction to proton translocation (for every two electrons transferred, four hydrogen ions are translocated across the cytoplasmic membrane), and thus conserves the redox energy in a proton gradient. This Yersinia pseudotuberculosis serotype O:1b (strain IP 31758) protein is NADH-quinone oxidoreductase subunit C/D.